Reading from the N-terminus, the 206-residue chain is Holliday junction branch migration complex subunit RuvA (206 aa).

The interval 1-64 (MIGKLKGTVD…EDQIRLFGFV (64 aa)) is domain I. Positions 65–143 (TEAEREWFRL…AFTAADPGLA (79 aa)) are domain II. The tract at residues 144–154 (RLAADVEATEA) is flexible linker. The segment at 154-206 (AAGGALADAVSALVNLGYGQAQAHTAIAAAGRKAGEDATTETLIRLGLKELAK) is domain III.

The protein belongs to the RuvA family. In terms of assembly, homotetramer. Forms an RuvA(8)-RuvB(12)-Holliday junction (HJ) complex. HJ DNA is sandwiched between 2 RuvA tetramers; dsDNA enters through RuvA and exits via RuvB. An RuvB hexamer assembles on each DNA strand where it exits the tetramer. Each RuvB hexamer is contacted by two RuvA subunits (via domain III) on 2 adjacent RuvB subunits; this complex drives branch migration. In the full resolvosome a probable DNA-RuvA(4)-RuvB(12)-RuvC(2) complex forms which resolves the HJ.

The protein resides in the cytoplasm. In terms of biological role, the RuvA-RuvB-RuvC complex processes Holliday junction (HJ) DNA during genetic recombination and DNA repair, while the RuvA-RuvB complex plays an important role in the rescue of blocked DNA replication forks via replication fork reversal (RFR). RuvA specifically binds to HJ cruciform DNA, conferring on it an open structure. The RuvB hexamer acts as an ATP-dependent pump, pulling dsDNA into and through the RuvAB complex. HJ branch migration allows RuvC to scan DNA until it finds its consensus sequence, where it cleaves and resolves the cruciform DNA. This chain is Holliday junction branch migration complex subunit RuvA, found in Azorhizobium caulinodans (strain ATCC 43989 / DSM 5975 / JCM 20966 / LMG 6465 / NBRC 14845 / NCIMB 13405 / ORS 571).